A 180-amino-acid polypeptide reads, in one-letter code: ATP synthase subunit b (180 aa).

Residues 15–35 (LIPEVPELVIGLLAFAIVFFV) traverse the membrane as a helical segment.

Belongs to the ATPase B chain family. In terms of assembly, F-type ATPases have 2 components, F(1) - the catalytic core - and F(0) - the membrane proton channel. F(1) has five subunits: alpha(3), beta(3), gamma(1), delta(1), epsilon(1). F(0) has three main subunits: a(1), b(2) and c(10-14). The alpha and beta chains form an alternating ring which encloses part of the gamma chain. F(1) is attached to F(0) by a central stalk formed by the gamma and epsilon chains, while a peripheral stalk is formed by the delta and b chains.

It is found in the cell membrane. In terms of biological role, f(1)F(0) ATP synthase produces ATP from ADP in the presence of a proton or sodium gradient. F-type ATPases consist of two structural domains, F(1) containing the extramembraneous catalytic core and F(0) containing the membrane proton channel, linked together by a central stalk and a peripheral stalk. During catalysis, ATP synthesis in the catalytic domain of F(1) is coupled via a rotary mechanism of the central stalk subunits to proton translocation. Functionally, component of the F(0) channel, it forms part of the peripheral stalk, linking F(1) to F(0). The chain is ATP synthase subunit b from Streptomyces avermitilis (strain ATCC 31267 / DSM 46492 / JCM 5070 / NBRC 14893 / NCIMB 12804 / NRRL 8165 / MA-4680).